Reading from the N-terminus, the 239-residue chain is Ribonuclease PH (239 aa).

Phosphate is bound by residues Arg-86 and 124–126; that span reads GTR.

It belongs to the RNase PH family. As to quaternary structure, homohexameric ring arranged as a trimer of dimers.

The enzyme catalyses tRNA(n+1) + phosphate = tRNA(n) + a ribonucleoside 5'-diphosphate. Phosphorolytic 3'-5' exoribonuclease that plays an important role in tRNA 3'-end maturation. Removes nucleotide residues following the 3'-CCA terminus of tRNAs; can also add nucleotides to the ends of RNA molecules by using nucleoside diphosphates as substrates, but this may not be physiologically important. Probably plays a role in initiation of 16S rRNA degradation (leading to ribosome degradation) during starvation. The polypeptide is Ribonuclease PH (Aromatoleum aromaticum (strain DSM 19018 / LMG 30748 / EbN1) (Azoarcus sp. (strain EbN1))).